A 115-amino-acid polypeptide reads, in one-letter code: Small ribosomal subunit protein uS14m (115 aa).

This sequence belongs to the universal ribosomal protein uS14 family. In terms of assembly, component of the mitochondrial small ribosomal subunit (mt-SSU). Mature yeast 74S mitochondrial ribosomes consist of a small (37S) and a large (54S) subunit. The 37S small subunit contains a 15S ribosomal RNA (15S mt-rRNA) and 34 different proteins. The 54S large subunit contains a 21S rRNA (21S mt-rRNA) and 46 different proteins.

It is found in the mitochondrion. Component of the mitochondrial ribosome (mitoribosome), a dedicated translation machinery responsible for the synthesis of mitochondrial genome-encoded proteins, including at least some of the essential transmembrane subunits of the mitochondrial respiratory chain. The mitoribosomes are attached to the mitochondrial inner membrane and translation products are cotranslationally integrated into the membrane. This chain is Small ribosomal subunit protein uS14m (MRP2), found in Saccharomyces cerevisiae (strain ATCC 204508 / S288c) (Baker's yeast).